A 249-amino-acid chain; its full sequence is Probable transcriptional regulatory protein ERGA_CDS_03720 (249 aa).

A disordered region spans residues 1–21; it reads MAGHSQFANIKHRKGAQDAKR.

Belongs to the TACO1 family.

It localises to the cytoplasm. This is Probable transcriptional regulatory protein ERGA_CDS_03720 from Ehrlichia ruminantium (strain Gardel).